A 171-amino-acid chain; its full sequence is Sigma intracellular receptor 2 (171 aa).

The Cytoplasmic segment spans residues 1-6 (MAVCAR). Residues 7–27 (LLEWIFFFYFFSHIPITLLVD) traverse the membrane as a helical segment. Residues 8-153 (LEWIFFFYFF…PYLLVPVLLL (146 aa)) enclose the EXPERA domain. Residues 28–66 (LQAVLPPSLYPQELLDLMKWYTVAFKDHLMANPPPWFKS) are Lumenal-facing. A helical transmembrane segment spans residues 67–87 (FVYCEAILQLPFFPVAAYAFF). Cholesterol-binding residues include Ile73 and Gln75. Over 88-97 (KGGCKWIRIP) the chain is Cytoplasmic. A helical transmembrane segment spans residues 98–118 (AIVYSAHVATTVIAIIGHILF). The Lumenal segment spans residues 119 to 137 (GEFPKSDVIAPLTQKDRLT). A helical transmembrane segment spans residues 138-158 (LVSIYAPYLLVPVLLLLTMLF). Topologically, residues 159-171 (SPRYRQEEKRKRK) are cytoplasmic. The short motif at 167–171 (KRKRK) is the ER retention motif element.

It belongs to the TMEM97/sigma-2 receptor family. Homodimer.

Its subcellular location is the rough endoplasmic reticulum membrane. It is found in the nucleus membrane. Its function is as follows. Sigma-2 receptor which contributes to ameliorate dysfunctional cellular processes and slow degenerative progression by regulating cell functions including cholesterol biosynthesis/trafficking, membrane trafficking, autophagy, lipid membrane-bound protein trafficking, and receptor stabilization at the cell surface. Forms a ternary complex with PGRMC1 receptor and low density lipoprotein receptor/LDLR at the plasma membrane, which increases LDLR-mediated LDL cholesterol internalization. Decreases lysosomal sterol transporter NPC1 availability to the cell, probably through NPC1-binding, hence controlling lipid transport, including cholesterol and LBPA, outside of late endosome/lysosome. Binds regio- and stereoselective ligand 20(S)-hydroxycholesterol (20(S)-OHC), thereby linking OHC binding to cholesterol homeostasis. Also able to bind cholesterol. Binds histatin 1 (Hst 1)/HN1 salivary peptide at the ER membrane, which is critical for increasing mitochondria-ER contacts and stimulating Hst1 wound healing properties. May alter the activity of some cytochrome P450 proteins. Although shows homologies with sterol isomerases (EXPERA domain), not able to catalyze sterol isomerization. However, may act as sensors of these molecules. Acts as a quality control factor in the ER, promoting the proteolytic degradation of nonproductive and extramitochondrial precursor proteins in the ER membrane thus removing them from the ER surface. The chain is Sigma intracellular receptor 2 (tmem97) from Xenopus tropicalis (Western clawed frog).